The following is a 320-amino-acid chain: Carbonic anhydrase 6 (320 aa).

Residues 1 to 17 form the signal peptide; the sequence is MRALALLLALPLLGARA. The 258-residue stretch at 21–278 folds into the Alpha-carbonic anhydrase domain; the sequence is SLWTYSEGAL…LNGRVVESNF (258 aa). Cys-42 and Cys-224 are joined by a disulfide. The active-site Proton donor/acceptor is His-85. Zn(2+) contacts are provided by His-111, His-113, and His-138. 220-221 lines the substrate pocket; sequence TT. The N-linked (GlcNAc...) asparagine glycan is linked to Asn-256.

The protein belongs to the alpha-carbonic anhydrase family. Zn(2+) serves as cofactor.

Its subcellular location is the secreted. The enzyme catalyses hydrogencarbonate + H(+) = CO2 + H2O. In terms of biological role, reversible hydration of carbon dioxide. Its role in saliva is unknown. This is Carbonic anhydrase 6 (CA6) from Canis lupus familiaris (Dog).